Reading from the N-terminus, the 733-residue chain is MPIVPEILREVALTEEEYARAVALLGREPNLIELGMIGALWSEHCGYKHSRPLLRKLPTSGPHVVQGPGENAGAVELGDGLVVVLKIESHNHPSAVEPFQGAATGVGGIVRDIFAMGARPIALADSLRFGPLEEPRQQYLFHGVVGGIGWYGNCLGIPTVAGDVFFAPEYRQNPLVNAMCVGIAERSALIRARATGPGNLVVLVGADTGRDGIHGATFASVEDPERSHRGVVQVGNPFLEKLLLEACLEVLETGAVVAMQDLGAAGLTSASAEIAARGGTGIELDVALVPRRETGMTPYEVMLSESQERMLLVVDPEGIDRVLAIFRRWELHAVVIGRVTDDGLLRVLEDGQVVAELPVWLLTDACPTYVREAREAGEIRERRAFDPDALPDLQPAEVAEMLAALLRSPNIASRRPIYRTYDHTILTNTVLPPGAADAAVLRIKGQRFGIALKTDCNPRYCLLDPRLGTMHAVAEAARNVSCVGAEPLAITDCLNFGNPERPEIYYQLVQAIEGMAEACTVLGIPVVSGNVSLYNETEGRSIPPTPVVGIVGRLADVRRCVGMGFRGEGKVFLLGSELATLGGSEFLAQRHGLVAGAPPPLDLELERRVQACVREGIARGIVLAAHDCSEGGLLIALAESCMVGRIGGRFTTESLIAANGRLDRALFGESASRVIVQVAEGAEGALLGLARAHGVPVQELGRTGGDRFVVGELVDQPLSELIELWTTGLVESA.

His-44 is a catalytic residue. ATP-binding residues include Tyr-47 and Lys-86. Glu-88 is a Mg(2+) binding site. Substrate-binding positions include Ser-89 to His-92 and Arg-111. Residue His-90 is the Proton acceptor of the active site. Asp-112 contributes to the Mg(2+) binding site. Gln-233 lines the substrate pocket. Asp-261 lines the Mg(2+) pocket. A substrate-binding site is contributed by Glu-305 to Gln-307. Residues Asp-492 and Gly-529 each contribute to the ATP site. Mg(2+) is bound at residue Asn-530. Ser-532 contributes to the substrate binding site.

Belongs to the FGAMS family. In terms of assembly, monomer. Part of the FGAM synthase complex composed of 1 PurL, 1 PurQ and 2 PurS subunits.

The protein localises to the cytoplasm. It carries out the reaction N(2)-formyl-N(1)-(5-phospho-beta-D-ribosyl)glycinamide + L-glutamine + ATP + H2O = 2-formamido-N(1)-(5-O-phospho-beta-D-ribosyl)acetamidine + L-glutamate + ADP + phosphate + H(+). It participates in purine metabolism; IMP biosynthesis via de novo pathway; 5-amino-1-(5-phospho-D-ribosyl)imidazole from N(2)-formyl-N(1)-(5-phospho-D-ribosyl)glycinamide: step 1/2. Part of the phosphoribosylformylglycinamidine synthase complex involved in the purines biosynthetic pathway. Catalyzes the ATP-dependent conversion of formylglycinamide ribonucleotide (FGAR) and glutamine to yield formylglycinamidine ribonucleotide (FGAM) and glutamate. The FGAM synthase complex is composed of three subunits. PurQ produces an ammonia molecule by converting glutamine to glutamate. PurL transfers the ammonia molecule to FGAR to form FGAM in an ATP-dependent manner. PurS interacts with PurQ and PurL and is thought to assist in the transfer of the ammonia molecule from PurQ to PurL. The sequence is that of Phosphoribosylformylglycinamidine synthase subunit PurL from Thermomicrobium roseum (strain ATCC 27502 / DSM 5159 / P-2).